Consider the following 680-residue polypeptide: DNA-directed RNA polymerase subunit beta' (680 aa).

Zn(2+)-binding residues include Cys69, Cys71, Cys87, and Cys90. The Mg(2+) site is built by Asp489, Asp491, and Asp493.

This sequence belongs to the RNA polymerase beta' chain family. RpoC1 subfamily. As to quaternary structure, in plastids the minimal PEP RNA polymerase catalytic core is composed of four subunits: alpha, beta, beta', and beta''. When a (nuclear-encoded) sigma factor is associated with the core the holoenzyme is formed, which can initiate transcription. Mg(2+) is required as a cofactor. It depends on Zn(2+) as a cofactor.

It is found in the plastid. It localises to the chloroplast. It carries out the reaction RNA(n) + a ribonucleoside 5'-triphosphate = RNA(n+1) + diphosphate. Its function is as follows. DNA-dependent RNA polymerase catalyzes the transcription of DNA into RNA using the four ribonucleoside triphosphates as substrates. The sequence is that of DNA-directed RNA polymerase subunit beta' from Nasturtium officinale (Watercress).